The following is a 346-amino-acid chain: UPF0324 membrane protein FN0533 (346 aa).

10 helical membrane-spanning segments follow: residues 5–22 (LYGI…WKLG), 27–49 (LVGG…KNRA), 62–81 (VLQY…TIIS), 86–108 (SLPI…AKLI), 115–137 (VILI…APVI), 147–169 (AISV…GDIL), 216–233 (LTRT…AVYN), 248–270 (IFPM…NYFI), 283–305 (INNV…MVAI), and 315–337 (ILSG…LVSI).

The protein belongs to the UPF0324 family.

Its subcellular location is the cell membrane. The sequence is that of UPF0324 membrane protein FN0533 from Fusobacterium nucleatum subsp. nucleatum (strain ATCC 25586 / DSM 15643 / BCRC 10681 / CIP 101130 / JCM 8532 / KCTC 2640 / LMG 13131 / VPI 4355).